A 204-amino-acid chain; its full sequence is Transcriptional regulator GfcR (204 aa).

This sequence belongs to the purine/pyrimidine phosphoribosyltransferase family. GfcR subfamily.

This Methanoculleus marisnigri (strain ATCC 35101 / DSM 1498 / JR1) protein is Transcriptional regulator GfcR.